The chain runs to 232 residues: Expansin-YoaJ (232 aa).

An N-terminal signal peptide occupies residues 1–25; the sequence is MKKIMSAFVGMVLLTIFCFSPQASA. Positions 58 to 127 constitute an Expansin-like EG45 domain; sequence ITAINPADLN…MKDGKINIKW (70 aa).

It localises to the secreted. It is found in the cell wall. May promote colonization of plant roots. May cause loosening and extension of plant cell walls by disrupting non-covalent bonding between cellulose microfibrils and matrix glucans. Has very low expansin activity (in vitro). No enzymatic activity has been found. Binds to peptidoglycan and to plant cell walls. The protein is Expansin-YoaJ (yoaJ) of Bacillus subtilis (strain 168).